The sequence spans 249 residues: Uridylate kinase (249 aa).

Lys-21–Gly-24 is a binding site for ATP. Gly-63 provides a ligand contact to UMP. 2 residues coordinate ATP: Gly-64 and Arg-68. Residues Asp-84 and Thr-145 to Thr-152 contribute to the UMP site. Residues Thr-172, Tyr-178, and Asp-181 each contribute to the ATP site.

Belongs to the UMP kinase family. In terms of assembly, homohexamer.

It localises to the cytoplasm. The catalysed reaction is UMP + ATP = UDP + ADP. It participates in pyrimidine metabolism; CTP biosynthesis via de novo pathway; UDP from UMP (UMPK route): step 1/1. Its activity is regulated as follows. Inhibited by UTP. In terms of biological role, catalyzes the reversible phosphorylation of UMP to UDP. This chain is Uridylate kinase, found in Francisella tularensis subsp. holarctica (strain FTNF002-00 / FTA).